We begin with the raw amino-acid sequence, 341 residues long: Serpentine receptor class alpha-28 (341 aa).

7 helical membrane-spanning segments follow: residues 25–45 (FIIS…RVLL), 57–77 (LLFS…VIRL), 107–129 (YYYT…LFSF), 142–162 (ASIV…YWVF), 188–208 (VNNI…FLYI), 242–262 (IVIF…SVFI), and 275–295 (LIIS…LIIL).

The protein belongs to the nematode receptor-like protein sra family.

Its subcellular location is the membrane. This chain is Serpentine receptor class alpha-28 (sra-28), found in Caenorhabditis elegans.